The following is a 253-amino-acid chain: Acidic endochitinase pcht28 (253 aa).

An N-terminal signal peptide occupies residues 1 to 24; it reads MKFNIVSPVALSCLFFLFLTGTLA. The Proton donor role is filled by glutamate 92. A disulfide bond links cysteine 212 and cysteine 244.

Belongs to the glycosyl hydrolase 19 family. Chitinase class II subfamily.

Its subcellular location is the secreted. It is found in the extracellular space. The enzyme catalyses Random endo-hydrolysis of N-acetyl-beta-D-glucosaminide (1-&gt;4)-beta-linkages in chitin and chitodextrins.. Defense against chitin-containing fungal pathogens. The chain is Acidic endochitinase pcht28 from Solanum chilense (Tomato).